The sequence spans 133 residues: MVDAFVGTWKLVDSKNFDDYMKSLGVGFATRQVGNMTKPTTIIEVNGDTVIIKTQSTFKNTEISFKLGVEFDETTADDRKVKSIVTLDGGKLVHVQKWNGQETSLVREMVDGKLILTLTHGTAVCTRTYEKQA.

At Val2 the chain carries N-acetylvaline. At Thr8 the chain carries Phosphothreonine. Tyr20 is subject to Phosphotyrosine; by Tyr-kinases. Ser23 is subject to Phosphoserine. Thr30 carries the post-translational modification Phosphothreonine. Position 83 is a phosphoserine (Ser83). 127-129 provides a ligand contact to (9Z)-octadecenoate; sequence RTY. Position 127–129 (127–129) interacts with hexadecanoate; the sequence is RTY. Octadecanoate is bound at residue 127–129; sequence RTY.

Belongs to the calycin superfamily. Fatty-acid binding protein (FABP) family.

The protein resides in the cytoplasm. Functionally, FABPs are thought to play a role in the intracellular transport of long-chain fatty acids and their acyl-CoA esters. This Bos mutus grunniens (Wild yak) protein is Fatty acid-binding protein, heart (FABP3).